The chain runs to 106 residues: Large ribosomal subunit protein uL24 (106 aa).

This sequence belongs to the universal ribosomal protein uL24 family. Part of the 50S ribosomal subunit.

Its function is as follows. One of two assembly initiator proteins, it binds directly to the 5'-end of the 23S rRNA, where it nucleates assembly of the 50S subunit. One of the proteins that surrounds the polypeptide exit tunnel on the outside of the subunit. This chain is Large ribosomal subunit protein uL24, found in Thermosipho melanesiensis (strain DSM 12029 / CIP 104789 / BI429).